Here is a 352-residue protein sequence, read N- to C-terminus: MKKIVFTGGGTVGHVTLNLLLMPKFIEDGWEVHYIGDKRGIEHQEILKSGLDVTFHSIATGKLRRYFSWQNMLDVFKVGWGIVQSLFIMLRLRPQTLFSKGGFVSVPPVIAARVSGVPVFIHESDLSMGLANKIAYKFATKMYSTFEQASSLSKVEHVGAVTKVSDQKNPEPDELVDIQSHFNHKLPTVLFVGGSAGARVFNQLVTDHKKELTERYNIINLTGDSSLNELSQNLFRVDYVTDLYQPLMELADIVVTRGGANTIFELLAIAKLHVIVPLGREASRGDQIENAAYFVKKGYAEDLQESDLTLDSLEEKLSHLLSHKEDYQAKMKASKELKSLADFYQLLKKDLS.

Positions 195 and 287 each coordinate UDP-N-acetyl-alpha-D-glucosamine.

The protein belongs to the glycosyltransferase 28 family. MurG subfamily.

It is found in the cell membrane. The enzyme catalyses Mur2Ac(oyl-L-Ala-gamma-D-Glu-L-Lys-D-Ala-D-Ala)-di-trans,octa-cis-undecaprenyl diphosphate + UDP-N-acetyl-alpha-D-glucosamine = beta-D-GlcNAc-(1-&gt;4)-Mur2Ac(oyl-L-Ala-gamma-D-Glu-L-Lys-D-Ala-D-Ala)-di-trans,octa-cis-undecaprenyl diphosphate + UDP + H(+). Its pathway is cell wall biogenesis; peptidoglycan biosynthesis. Its function is as follows. Cell wall formation. Catalyzes the transfer of a GlcNAc subunit on undecaprenyl-pyrophosphoryl-MurNAc-pentapeptide (lipid intermediate I) to form undecaprenyl-pyrophosphoryl-MurNAc-(pentapeptide)GlcNAc (lipid intermediate II). This is UDP-N-acetylglucosamine--N-acetylmuramyl-(pentapeptide) pyrophosphoryl-undecaprenol N-acetylglucosamine transferase from Streptococcus pneumoniae (strain Taiwan19F-14).